The sequence spans 140 residues: uncharacterized protein (140 aa).

Residues 121–140 (EEVKNGELIDPNVTTEDEKL) form a disordered region.

This is an uncharacterized protein from Schizosaccharomyces pombe (strain 972 / ATCC 24843) (Fission yeast).